A 65-amino-acid chain; its full sequence is Large ribosomal subunit protein bL35 (65 aa).

Belongs to the bacterial ribosomal protein bL35 family.

The protein is Large ribosomal subunit protein bL35 of Buchnera aphidicola subsp. Cinara cedri (strain Cc).